The following is a 969-amino-acid chain: Leucine--tRNA ligase (969 aa).

The 'HIGH' region motif lies at 45–55; that stretch reads PYTNAPLHIGH. The 'KMSKS' region signature appears at 649 to 653; the sequence is KMSKS. An ATP-binding site is contributed by K652.

The protein belongs to the class-I aminoacyl-tRNA synthetase family.

Its subcellular location is the cytoplasm. The catalysed reaction is tRNA(Leu) + L-leucine + ATP = L-leucyl-tRNA(Leu) + AMP + diphosphate. The chain is Leucine--tRNA ligase from Staphylothermus marinus (strain ATCC 43588 / DSM 3639 / JCM 9404 / F1).